A 463-amino-acid polypeptide reads, in one-letter code: L-seryl-tRNA(Sec) selenium transferase (463 aa).

The residue at position 295 (Lys295) is an N6-(pyridoxal phosphate)lysine.

This sequence belongs to the SelA family. In terms of assembly, homodecamer; pentamer of dimers. Binds only one seryl-tRNA(Sec) per dimer. Requires pyridoxal 5'-phosphate as cofactor.

The protein localises to the cytoplasm. The enzyme catalyses L-seryl-tRNA(Sec) + selenophosphate + H(+) = L-selenocysteinyl-tRNA(Sec) + phosphate. The protein operates within aminoacyl-tRNA biosynthesis; selenocysteinyl-tRNA(Sec) biosynthesis; selenocysteinyl-tRNA(Sec) from L-seryl-tRNA(Sec) (bacterial route): step 1/1. In terms of biological role, converts seryl-tRNA(Sec) to selenocysteinyl-tRNA(Sec) required for selenoprotein biosynthesis. This chain is L-seryl-tRNA(Sec) selenium transferase, found in Shigella flexneri.